The primary structure comprises 629 residues: Pescadillo homolog (629 aa).

Residues 321–414 form the BRCT domain; it reads RLRTLFKGLK…QLLPTNKYFI (94 aa). Disordered stretches follow at residues 439–470, 488–568, and 598–629; these read KALLDPSLIETHAQSDEDSEDEAEKEEEETVD, EYKK…MVKP, and IEASEKEARKTAKREARKEAAAAAAKASKLGK. Residues serine 453 and serine 457 each carry the phosphoserine modification. 2 stretches are compositionally biased toward acidic residues: residues 454-470 and 498-523; these read DEDSEDEAEKEEEETVD and VNEDEEDPEDDDEDDDEEEAEEEELD. The span at 524–535 shows a compositional bias: basic and acidic residues; it reads EKSKRLQEEKQK. A compositionally biased stretch (basic residues) spans 542 to 551; sequence KVHKVNKRQV. Composition is skewed to basic and acidic residues over residues 552–561 and 598–617; these read HKAEVDEHRL and IEASEKEARKTAKREARKEA. A coiled-coil region spans residues 584–627; that stretch reads KEKEEWLLRKKRRTIEASEKEARKTAKREARKEAAAAAAKASKL. Low complexity predominate over residues 618 to 629; sequence AAAAAKASKLGK.

This sequence belongs to the pescadillo family.

It is found in the nucleus. The protein resides in the nucleolus. Its subcellular location is the nucleoplasm. Required for maturation of ribosomal RNAs and formation of the large ribosomal subunit. This is Pescadillo homolog from Drosophila erecta (Fruit fly).